The primary structure comprises 687 residues: Glycine--tRNA ligase beta subunit (687 aa).

Belongs to the class-II aminoacyl-tRNA synthetase family. As to quaternary structure, tetramer of two alpha and two beta subunits.

It localises to the cytoplasm. The enzyme catalyses tRNA(Gly) + glycine + ATP = glycyl-tRNA(Gly) + AMP + diphosphate. In Trichlorobacter lovleyi (strain ATCC BAA-1151 / DSM 17278 / SZ) (Geobacter lovleyi), this protein is Glycine--tRNA ligase beta subunit.